Consider the following 355-residue polypeptide: Tyrosine recombinase XerC (355 aa).

A Core-binding (CB) domain is found at 4-89 (TQFDGDIDSF…AVRGFFAWAY (86 aa)). Residues 138 to 180 (DDGGAAAASGSGKAAGKTADKSADTVNRSEAPARADKRDNARV) are disordered. Positions 141 to 154 (GAAAASGSGKAAGK) are enriched in low complexity. The 192-residue stretch at 158-349 (KSADTVNRSE…SIEQLKNRYG (192 aa)) folds into the Tyr recombinase domain. Positions 168-178 (APARADKRDNA) are enriched in basic and acidic residues. Catalysis depends on residues arginine 200, lysine 224, histidine 301, arginine 304, and histidine 327. Tyrosine 336 (O-(3'-phospho-DNA)-tyrosine intermediate) is an active-site residue.

Belongs to the 'phage' integrase family. XerC subfamily. As to quaternary structure, forms a cyclic heterotetrameric complex composed of two molecules of XerC and two molecules of XerD.

The protein resides in the cytoplasm. Its function is as follows. Site-specific tyrosine recombinase, which acts by catalyzing the cutting and rejoining of the recombining DNA molecules. The XerC-XerD complex is essential to convert dimers of the bacterial chromosome into monomers to permit their segregation at cell division. It also contributes to the segregational stability of plasmids. The sequence is that of Tyrosine recombinase XerC from Bifidobacterium longum subsp. infantis (strain ATCC 15697 / DSM 20088 / JCM 1222 / NCTC 11817 / S12).